The sequence spans 506 residues: Peptidyl-prolyl cis-trans isomerase CYP59 (506 aa).

In terms of domain architecture, PPIase cyclophilin-type spans 1–161 (MSVLIVTSLG…KNIRIKHTHI (161 aa)). One can recognise an RRM domain in the interval 243-321 (NVLFVCKLNP…RRIHVDFSQS (79 aa)). The segment at 341 to 357 (GCFKCGSTDHIAKDCVG) adopts a CCHC-type zinc-finger fold. Basic and acidic residues-rich tracts occupy residues 388–404 (ETPK…EKIQ) and 412–506 (GEGK…RRDR). The segment at 388 to 506 (ETPKHNSHER…REARHERRDR (119 aa)) is disordered.

This sequence belongs to the cyclophilin-type PPIase family. Component of the BZR1 complex. Interacts with NRPB1 (via CTD domain), SCL28, SCL30, SCL30A, SCL33, SC35, SR30, SR34, RSZ21, RS2Z33, RS31 and RS40. Ubiquitous.

It is found in the nucleus. It catalyses the reaction [protein]-peptidylproline (omega=180) = [protein]-peptidylproline (omega=0). Its function is as follows. PPIases accelerate the folding of proteins. It catalyzes the cis-trans isomerization of proline imidic peptide bonds in oligopeptides. Influences somehow regulation of RNA pol II (CTD) phosphorylation. Binds RNA with preferences for GC-rich sequences. Probably involved in activities connecting transcription and pre-mRNA processing. Involved in brassinostroid response. The chain is Peptidyl-prolyl cis-trans isomerase CYP59 (CYP59) from Arabidopsis thaliana (Mouse-ear cress).